The sequence spans 289 residues: Enoyl-CoA delta isomerase 1, mitochondrial (289 aa).

The N-terminal 28 residues, 1–28 (MALAAARRLLLHAGSRLGRREAVDGARR), are a transit peptide targeting the mitochondrion. The residue at position 48 (Lys48) is an N6-acetyllysine; alternate. An N6-succinyllysine; alternate modification is found at Lys48. Lys71 bears the N6-succinyllysine mark. Lys76 bears the N6-acetyllysine mark. Residues 93 to 97 (AGLDL), Gly140, and Asn164 contribute to the substrate site. 4 positions are modified to N6-acetyllysine; alternate: Lys222, Lys229, Lys255, and Lys270. 4 positions are modified to N6-succinyllysine; alternate: Lys222, Lys229, Lys255, and Lys270. The residue at position 275 (Lys275) is an N6-succinyllysine. An N6-acetyllysine; alternate modification is found at Lys283. Lys283 is modified (N6-succinyllysine; alternate).

This sequence belongs to the enoyl-CoA hydratase/isomerase family. In terms of assembly, homotrimer.

The protein localises to the mitochondrion matrix. The enzyme catalyses a (3Z)-enoyl-CoA = a 4-saturated (2E)-enoyl-CoA. It carries out the reaction a (3E)-enoyl-CoA = a 4-saturated (2E)-enoyl-CoA. The catalysed reaction is (3Z)-octenoyl-CoA = (2E)-octenoyl-CoA. It catalyses the reaction (2E)-tetradecenoyl-CoA = (3Z)-tetradecenoyl-CoA. The enzyme catalyses (3Z)-dodecenoyl-CoA = (2E)-dodecenoyl-CoA. It carries out the reaction (3Z)-hexenoyl-CoA = (2E)-hexenoyl-CoA. The catalysed reaction is (3Z)-decenoyl-CoA = (2E)-decenoyl-CoA. It participates in lipid metabolism; fatty acid beta-oxidation. In terms of biological role, key enzyme of fatty acid beta-oxidation. Able to isomerize both 3-cis (3Z) and 3-trans (3E) double bonds into the 2-trans (2E) form in a range of enoyl-CoA species, with a preference for (3Z)-enoyl-CoAs over (3E)-enoyl-CoAs. The catalytic efficiency of this enzyme is not affected by the fatty acyl chain length. This Mus musculus (Mouse) protein is Enoyl-CoA delta isomerase 1, mitochondrial.